The chain runs to 709 residues: Protein SOSEKI 3 (709 aa).

Positions 8-101 (SSVQVLYQLS…YVLRASELFD (94 aa)) are DIX-like oligomerization domain. 5 disordered regions span residues 242-266 (LHTP…AKRM), 315-344 (RDGR…AEQS), 358-393 (GGSS…KTPC), 411-439 (PSPA…NRPS), and 506-560 (DSPT…DTKP). Over residues 329 to 342 (ELREVQNEKEKEAE) the composition is skewed to basic and acidic residues. Over residues 417–436 (NKAHSSLDRQEIPPQEECKN) the composition is skewed to basic and acidic residues. A compositionally biased stretch (polar residues) spans 529–544 (VKTSNSLPRVKTTTSP). The C2HC/C3H-type zinc finger occupies 663–692 (ILQECSTCGRTFKPDSLQVHMRGCHPPQYA). Residues cysteine 667, cysteine 670, histidine 682, and cysteine 686 each contribute to the Zn(2+) site.

Belongs to the SOSEKI family. Homodimer. Forms long polymer filaments with other SOKs proteins polymers crucial for polar localization and biological activity. Zn(2+) serves as cofactor.

Its subcellular location is the cell membrane. SOSEKI proteins locally interpret global polarity cues and can influence cell division orientation to coordinate cell polarization relative to body axes. This is Protein SOSEKI 3 from Physcomitrium patens (Spreading-leaved earth moss).